A 769-amino-acid polypeptide reads, in one-letter code: Signal transducer and activator of transcription 3.1 (769 aa).

The short motif at 150 to 162 (DVRKKVQDLEQKM) is the Essential for nuclear import element. One can recognise an SH2 domain in the interval 580-670 (WNEGYIMGFI…DATNILVSPL (91 aa)). Position 728 is a phosphoserine; by NLK (Ser-728).

It belongs to the transcription factor STAT family. Forms a homodimer or a heterodimer with a related family member, such as stat1. Interacts with nlk.2. Post-translationally, phosphorylation of both tyrosine and serine residues, together with dimerization, is required for mesoderm induction.

It localises to the cytoplasm. The protein resides in the nucleus. In terms of biological role, transcription factor that binds to target promoter sequences and activates transcription upon il6st/gp130 stimulation. Mediates ventralization of embryos, at least in part via inhibition of smad2 signaling. Required for hairy2 to induce dll1/delta1 and promote neural crest cell proliferation and differentiation. Involved in TGFbeta-mediated mesoderm induction in early embryos, acting downstream of map3k7/tak1 and nlk.2. The chain is Signal transducer and activator of transcription 3.1 (stat3.1) from Xenopus laevis (African clawed frog).